We begin with the raw amino-acid sequence, 97 residues long: Large ribosomal subunit protein bL36m (97 aa).

This sequence belongs to the bacterial ribosomal protein bL36 family. Component of the mitochondrial ribosome large subunit (39S) which comprises a 16S rRNA and about 50 distinct proteins.

Its subcellular location is the mitochondrion. The polypeptide is Large ribosomal subunit protein bL36m (Mrpl36) (Rattus norvegicus (Rat)).